A 336-amino-acid chain; its full sequence is 4-hydroxy-3-methylbut-2-enyl diphosphate reductase (336 aa).

A [4Fe-4S] cluster-binding site is contributed by C37. Positions 66 and 99 each coordinate (2E)-4-hydroxy-3-methylbut-2-enyl diphosphate. H66 and H99 together coordinate dimethylallyl diphosphate. H66 and H99 together coordinate isopentenyl diphosphate. C121 lines the [4Fe-4S] cluster pocket. H149 contributes to the (2E)-4-hydroxy-3-methylbut-2-enyl diphosphate binding site. Dimethylallyl diphosphate is bound at residue H149. H149 contacts isopentenyl diphosphate. Residue E151 is the Proton donor of the active site. (2E)-4-hydroxy-3-methylbut-2-enyl diphosphate is bound at residue T189. Residue C219 participates in [4Fe-4S] cluster binding. Positions 247, 248, 249, and 292 each coordinate (2E)-4-hydroxy-3-methylbut-2-enyl diphosphate. S247, S248, N249, and S292 together coordinate dimethylallyl diphosphate. S247, S248, N249, and S292 together coordinate isopentenyl diphosphate.

It belongs to the IspH family. It depends on [4Fe-4S] cluster as a cofactor.

The enzyme catalyses isopentenyl diphosphate + 2 oxidized [2Fe-2S]-[ferredoxin] + H2O = (2E)-4-hydroxy-3-methylbut-2-enyl diphosphate + 2 reduced [2Fe-2S]-[ferredoxin] + 2 H(+). The catalysed reaction is dimethylallyl diphosphate + 2 oxidized [2Fe-2S]-[ferredoxin] + H2O = (2E)-4-hydroxy-3-methylbut-2-enyl diphosphate + 2 reduced [2Fe-2S]-[ferredoxin] + 2 H(+). The protein operates within isoprenoid biosynthesis; dimethylallyl diphosphate biosynthesis; dimethylallyl diphosphate from (2E)-4-hydroxy-3-methylbutenyl diphosphate: step 1/1. It participates in isoprenoid biosynthesis; isopentenyl diphosphate biosynthesis via DXP pathway; isopentenyl diphosphate from 1-deoxy-D-xylulose 5-phosphate: step 6/6. In terms of biological role, catalyzes the conversion of 1-hydroxy-2-methyl-2-(E)-butenyl 4-diphosphate (HMBPP) into a mixture of isopentenyl diphosphate (IPP) and dimethylallyl diphosphate (DMAPP). Acts in the terminal step of the DOXP/MEP pathway for isoprenoid precursor biosynthesis. The chain is 4-hydroxy-3-methylbut-2-enyl diphosphate reductase from Nocardia farcinica (strain IFM 10152).